We begin with the raw amino-acid sequence, 452 residues long: 3-phosphoshikimate 1-carboxyvinyltransferase (452 aa).

3-phosphoshikimate is bound by residues Lys-24, Ser-25, and Arg-29. Residue Lys-24 coordinates phosphoenolpyruvate. Residues Gly-95 and Arg-123 each coordinate phosphoenolpyruvate. 3-phosphoshikimate contacts are provided by Ser-167, Gln-169, Asp-319, and Lys-346. Gln-169 provides a ligand contact to phosphoenolpyruvate. Residue Asp-319 is the Proton acceptor of the active site. 2 residues coordinate phosphoenolpyruvate: Arg-350 and Arg-394.

The protein belongs to the EPSP synthase family. Monomer.

It localises to the cytoplasm. It catalyses the reaction 3-phosphoshikimate + phosphoenolpyruvate = 5-O-(1-carboxyvinyl)-3-phosphoshikimate + phosphate. Its pathway is metabolic intermediate biosynthesis; chorismate biosynthesis; chorismate from D-erythrose 4-phosphate and phosphoenolpyruvate: step 6/7. Functionally, catalyzes the transfer of the enolpyruvyl moiety of phosphoenolpyruvate (PEP) to the 5-hydroxyl of shikimate-3-phosphate (S3P) to produce enolpyruvyl shikimate-3-phosphate and inorganic phosphate. This chain is 3-phosphoshikimate 1-carboxyvinyltransferase, found in Phenylobacterium zucineum (strain HLK1).